The primary structure comprises 829 residues: Leucine--tRNA ligase (829 aa).

Positions 40-50 match the 'HIGH' region motif; it reads PYPSGNIHMGH. The 'KMSKS' region signature appears at 594–598; it reads KMSKS. Lys-597 contributes to the ATP binding site.

Belongs to the class-I aminoacyl-tRNA synthetase family.

It localises to the cytoplasm. It catalyses the reaction tRNA(Leu) + L-leucine + ATP = L-leucyl-tRNA(Leu) + AMP + diphosphate. In Anaplasma marginale (strain St. Maries), this protein is Leucine--tRNA ligase.